Reading from the N-terminus, the 330-residue chain is 4-hydroxythreonine-4-phosphate dehydrogenase (330 aa).

Positions 136 and 137 each coordinate substrate. Histidine 166, histidine 211, and histidine 266 together coordinate a divalent metal cation. The substrate site is built by lysine 274, asparagine 283, and arginine 292.

It belongs to the PdxA family. Homodimer. The cofactor is Zn(2+). It depends on Mg(2+) as a cofactor. Requires Co(2+) as cofactor.

Its subcellular location is the cytoplasm. It catalyses the reaction 4-(phosphooxy)-L-threonine + NAD(+) = 3-amino-2-oxopropyl phosphate + CO2 + NADH. It participates in cofactor biosynthesis; pyridoxine 5'-phosphate biosynthesis; pyridoxine 5'-phosphate from D-erythrose 4-phosphate: step 4/5. In terms of biological role, catalyzes the NAD(P)-dependent oxidation of 4-(phosphooxy)-L-threonine (HTP) into 2-amino-3-oxo-4-(phosphooxy)butyric acid which spontaneously decarboxylates to form 3-amino-2-oxopropyl phosphate (AHAP). This Sodalis glossinidius (strain morsitans) protein is 4-hydroxythreonine-4-phosphate dehydrogenase.